Here is a 751-residue protein sequence, read N- to C-terminus: Photosystem I P700 chlorophyll a apoprotein A1 (751 aa).

Helical transmembrane passes span 73 to 96 (VFSAHFGQLGIIFIWLSGMYFHGA), 159 to 182 (LYTTAIGGLVMAAAMFFAGWFHYH), 198 to 222 (LNHHLAGLLGLGSLAWAGHQIHVSL), 294 to 312 (TVHHHLAIAVLFLVAGHQY), 349 to 372 (WHAQLAINLALFGSLSIIVSHHMY), 388 to 414 (LSLFTHHMWIGGFCIVGAGAHAGIFMV), 436 to 458 (AMISHLNWVCIFLGFHSFGLYIH), and 533 to 551 (FMVHHIHAFTIHVTVLILL). Residues cysteine 575 and cysteine 584 each coordinate [4Fe-4S] cluster. The next 2 helical transmembrane spans lie at 591-612 (HVFLGLFWMYNSISIVIFHFSW) and 665-687 (LSAYGLIFLGAHFVWAFSLMFLF). Histidine 676 contributes to the chlorophyll a' binding site. The chlorophyll a site is built by methionine 684 and tyrosine 692. Tryptophan 693 contacts phylloquinone. The chain crosses the membrane as a helical span at residues 725–745 (AVGVAHYLLGGIATTWSFFLA).

Belongs to the PsaA/PsaB family. The PsaA/B heterodimer binds the P700 chlorophyll special pair and subsequent electron acceptors. PSI consists of a core antenna complex that captures photons, and an electron transfer chain that converts photonic excitation into a charge separation. The eukaryotic PSI reaction center is composed of at least 11 subunits. The cofactor is P700 is a chlorophyll a/chlorophyll a' dimer, A0 is one or more chlorophyll a, A1 is one or both phylloquinones and FX is a shared 4Fe-4S iron-sulfur center..

It is found in the plastid. It localises to the chloroplast thylakoid membrane. The enzyme catalyses reduced [plastocyanin] + hnu + oxidized [2Fe-2S]-[ferredoxin] = oxidized [plastocyanin] + reduced [2Fe-2S]-[ferredoxin]. Its function is as follows. PsaA and PsaB bind P700, the primary electron donor of photosystem I (PSI), as well as the electron acceptors A0, A1 and FX. PSI is a plastocyanin/cytochrome c6-ferredoxin oxidoreductase, converting photonic excitation into a charge separation, which transfers an electron from the donor P700 chlorophyll pair to the spectroscopically characterized acceptors A0, A1, FX, FA and FB in turn. Oxidized P700 is reduced on the lumenal side of the thylakoid membrane by plastocyanin or cytochrome c6. This chain is Photosystem I P700 chlorophyll a apoprotein A1, found in Chlorella vulgaris (Green alga).